Here is a 433-residue protein sequence, read N- to C-terminus: Aspartate--tRNA(Asp/Asn) ligase (433 aa).

E167 contributes to the L-aspartate binding site. The aspartate stretch occupies residues 189–192; that stretch reads QLFK. Residue R211 participates in L-aspartate binding. ATP is bound by residues 211–213, 219–221, and E356; these read RAE and RHL. The Mg(2+) site is built by E356 and S359. Residues S359 and R363 each contribute to the L-aspartate site. Position 404–407 (404–407) interacts with ATP; sequence GGER.

Belongs to the class-II aminoacyl-tRNA synthetase family. Type 2 subfamily. In terms of assembly, homodimer. Mg(2+) is required as a cofactor.

It is found in the cytoplasm. It carries out the reaction tRNA(Asx) + L-aspartate + ATP = L-aspartyl-tRNA(Asx) + AMP + diphosphate. In terms of biological role, aspartyl-tRNA synthetase with relaxed tRNA specificity since it is able to aspartylate not only its cognate tRNA(Asp) but also tRNA(Asn). Reaction proceeds in two steps: L-aspartate is first activated by ATP to form Asp-AMP and then transferred to the acceptor end of tRNA(Asp/Asn). The polypeptide is Aspartate--tRNA(Asp/Asn) ligase (Haloferax volcanii (Halobacterium volcanii)).